Here is a 205-residue protein sequence, read N- to C-terminus: Ras-related protein rab-6.2 (205 aa).

GTP-binding positions include 18 to 25, T42, 66 to 70, and 124 to 127; these read EQSVGKTS, TAGQE, and KTDL. S-geranylgeranyl cysteine attachment occurs at residues C203 and C205. C205 bears the Cysteine methyl ester mark.

It belongs to the small GTPase superfamily. Rab family. As to quaternary structure, interacts with GARP complex component vps-52. Interacts (in GTP-bound form) with lin-10. May interact (in GTP-bound form) with eat-17. Highly expressed in body wall muscles, pharyngeal and vulval muscles, hypodermis, intestine, the gonad, coelomocytes, and neurons, including command interneuron (at protein level). Highly expressed in the terminal bulb muscles.

It localises to the perikaryon. The protein resides in the cell projection. It is found in the dendrite. Its subcellular location is the golgi apparatus. The protein localises to the cytoplasmic vesicle. Functionally, the small GTPases Rab are key regulators of intracellular membrane trafficking, from the formation of transport vesicles to their fusion with membranes. Rabs cycle between an inactive GDP-bound form and an active GTP-bound form that is able to recruit to membranes different set of downstream effectors directly responsible for vesicle formation, movement, tethering and fusion. In its active GTP-bound form, acts redundantly with rab-6.1 (in its active GTP-bound form) to positively regulate the retrograde trafficking of cargo molecules from endosomes to the Golgi compartment. Required for the retrograde trafficking of glr-1, a subunit of AMPA-type glutamate receptors (AMPRs), out of early endosomes and into the Golgi compartment in neurons. Its role in glr-1 trafficking may partly be mediated by its interaction with lin-10 and association with components of the retromer complex such as rme-8. Together with rab-6.2, promotes the retrograde trafficking of mig-14 from endosomes to Golgi structures in the intestine. Plays a role in the epidermis to promote cuticle integrity and impermeability of the cuticle barrier to exogenous molecules. May have a role in the glycosylation of the cuticular surface. Required for seam cell division and alae formation. Required for grinder formation, which is the feeding organ that breaks down food. In contrast to rab-6.1, may play a minor role in the exocytosis of secretory vesicles (cortical granules) during the oocyte-to-embryo transition. The sequence is that of Ras-related protein rab-6.2 from Caenorhabditis elegans.